Reading from the N-terminus, the 663-residue chain is Protein-arginine deiminase type-4 (663 aa).

Residues N153, D155, D157, D165, D168, E170, D176, and D179 each coordinate Ca(2+). Citrulline occurs at positions 205, 212, and 218. Q349 serves as a coordination point for Ca(2+). D350 is a catalytic residue. Ca(2+) is bound by residues E351, E353, D369, and S370. R372 is modified (citrulline). N373 lines the Ca(2+) pocket. Residues R374 and R383 each carry the citrulline modification. R374 serves as a coordination point for substrate. Ca(2+)-binding residues include D388, F407, L410, and E411. Residues H471 and D473 contribute to the active site. Position 639 (R639) interacts with substrate. The active site involves C645.

It belongs to the protein arginine deiminase family. Ca(2+) is required as a cofactor. Post-translationally, autocitrullination at Arg-372 and Arg-374 inactivates the enzyme. Expressed in eosinophils and neutrophils, not expressed in peripheral monocytes or lymphocytes.

The protein localises to the cytoplasm. It is found in the nucleus. Its subcellular location is the cytoplasmic granule. The enzyme catalyses L-arginyl-[protein] + H2O = L-citrullyl-[protein] + NH4(+). Its activity is regulated as follows. Strongly Inhibited by F-amidine and N-alpha-benzoyl-N5-(2-chloro-1-iminoethyl)-L-ornithine amide (Cl-amidine). These inhibitors are however not specific to PADI4 and also inhibit other members of the family. Incorporation of a carboxylate ortho to the backbone amide of Cl-amidine results in inhibitors with increased specificity for PADI4: N-alpha-(2-carboxyl)benzoyl-N(5)-(2-fluoro-1-iminoethyl)-L-ornithine amide (o-F-amidine) and N-alpha-(2-carboxyl)benzoyl-N(5)-(2-chloro-1-iminoethyl)-L-ornithine amide (o-Cl-amidine). Strongly and specifically inhibited by Thr-Asp-F-amidine (TDFA); other members of the family are not inhibited. In terms of biological role, catalyzes the citrullination/deimination of arginine residues of proteins such as histones, thereby playing a key role in histone code and regulation of stem cell maintenance. Citrullinates histone H1 at 'Arg-54' (to form H1R54ci), histone H3 at 'Arg-2', 'Arg-8', 'Arg-17' and/or 'Arg-26' (to form H3R2ci, H3R8ci, H3R17ci, H3R26ci, respectively) and histone H4 at 'Arg-3' (to form H4R3ci). Acts as a key regulator of stem cell maintenance by mediating citrullination of histone H1: citrullination of 'Arg-54' of histone H1 (H1R54ci) results in H1 displacement from chromatin and global chromatin decondensation, thereby promoting pluripotency and stem cell maintenance. Promotes profound chromatin decondensation during the innate immune response to infection in neutrophils by mediating formation of H1R54ci. Required for the formation of neutrophil extracellular traps (NETs); NETs are mainly composed of DNA fibers and are released by neutrophils to bind pathogens during inflammation. Citrullination of histone H3 prevents their methylation by CARM1 and HRMT1L2/PRMT1 and represses transcription. Citrullinates EP300/P300 at 'Arg-2142', which favors its interaction with NCOA2/GRIP1. The chain is Protein-arginine deiminase type-4 (PADI4) from Homo sapiens (Human).